The sequence spans 87 residues: MAFKKRFTPRRKFCRFCADKDLPINYKRPDILRDFVTERGKIIARRITGTCAHHQRLLTTEIKRARQMALLFYTSTHSSDVLKKSSL.

This sequence belongs to the bacterial ribosomal protein bS18 family. Part of the 30S ribosomal subunit. Forms a tight heterodimer with protein bS6.

Its function is as follows. Binds as a heterodimer with protein bS6 to the central domain of the 16S rRNA, where it helps stabilize the platform of the 30S subunit. The polypeptide is Small ribosomal subunit protein bS18 (Oleidesulfovibrio alaskensis (strain ATCC BAA-1058 / DSM 17464 / G20) (Desulfovibrio alaskensis)).